We begin with the raw amino-acid sequence, 348 residues long: MAEKVLVTGGAGYIGSHTVLELLEAGYLPVVIDNFHNAFRGGGSLPESLRRVQELTGRSVEFEEMDILDQGALQRLFKKHSFMAVIHFAGLKAVGESVQKPLDYYRVNLTGTIQLLEIMKAHGVKNLVFSSSATVYGNPQYLPLDEAHPTGGCTNPYGKSKFFIEEMIRDLCQADKTWNAVLLRYFNPTGAHASGCIGEDPQGIPNNLMPYVSQVAIGRREALNVFGNDYDTEDGTGVRDYIHVVDLAKGHIAALRKLKEQCGCRIYNLGTGTGYSVLQMVQAMEKASGKKIPYKVVARREGDVAACYANPSLAHEELGWTAALGLDRMCEDLWRWQKQNPSGFGTQA.

Residues 12 to 14 (GYI), 33 to 37 (DNFHN), 66 to 67 (DI), Phe-88, and Lys-92 each bind NAD(+). Position 132 to 134 (132 to 134 (SAT)) interacts with substrate. Catalysis depends on Tyr-157, which acts as the Proton acceptor. Residues Lys-161 and Tyr-185 each coordinate NAD(+). Substrate-binding positions include 185–187 (YFN), 206–208 (NNL), 224–226 (NVF), Arg-239, and 300–303 (REGD).

It belongs to the NAD(P)-dependent epimerase/dehydratase family. As to quaternary structure, homodimer. It depends on NAD(+) as a cofactor.

It carries out the reaction UDP-alpha-D-glucose = UDP-alpha-D-galactose. The enzyme catalyses UDP-N-acetyl-alpha-D-glucosamine = UDP-N-acetyl-alpha-D-galactosamine. It participates in carbohydrate metabolism; galactose metabolism. Catalyzes two distinct but analogous reactions: the reversible epimerization of UDP-glucose to UDP-galactose and the reversible epimerization of UDP-N-acetylglucosamine to UDP-N-acetylgalactosamine. The reaction with UDP-Gal plays a critical role in the Leloir pathway of galactose catabolism in which galactose is converted to the glycolytic intermediate glucose 6-phosphate. It contributes to the catabolism of dietary galactose and enables the endogenous biosynthesis of both UDP-Gal and UDP-GalNAc when exogenous sources are limited. Both UDP-sugar interconversions are important in the synthesis of glycoproteins and glycolipids. This chain is UDP-glucose 4-epimerase (GALE), found in Pongo abelii (Sumatran orangutan).